Here is a 685-residue protein sequence, read N- to C-terminus: MDVCARLALWLLWGLLLHQGQSLSHSHSEKNTGASSGATSEESTEAEFCRIDKPLCHSEDEKLSFEAVRNIHKLMDDDANGDVDVEESDEFLREDLNYHDPTVKHSTFHGEDKLISVEDLWKAWKASEVYNWTVDEVIQWLITYVELPQYEETFRKLQLTGHAMPRLAVTNTTMTGTVLKMTDRSHRQKLQLKALDTVLFGPPLLTRHNHLKDFMLVVSIVIGVGGCWFAYIQNRYSKEHMKKMMKDLEGLHRAEQSLHDLQERLHKAQEEHRTVEVEKVHLEKKLRDEINLAKQEAQRLKELREGTENERSRQKYAEEELEQVREALRKAEKELESHSSWYAPEALQKWLQLTHEVEVQYYNIKKQNAERQLLVAKEGAEKIKKKRNTLFGTFHVAHSSSLDDVDHKILTAKQALSEVTAALRERLHRWQQIEILCGFQIVNNPGIHSLVAALNIDPSWMGSTRPNPAHFIMTDDVDDMDEEIVSPLSMQSPSLQSSVRQRLTEPQHGLGSQRDLTHSDSESSLHTSDRQRVAPKPPQMGRAADEALNATSSNGSHRLIEGVHPGSLVEKLPDSPALAKKTILALNHGLDKAHSLMELNPSVPPGGSPLLDSSHSHSPSSPDPDTPSPVGDSRALQGSRNTRIPHLAGKKAMAEEDNGSIGEETDSSPGRKKFPLKIFKKPLKK.

The N-terminal stretch at 1–22 is a signal peptide; that stretch reads MDVCARLALWLLWGLLLHQGQS. The Extracellular portion of the chain corresponds to 23-213; the sequence is LSHSHSEKNT…LLTRHNHLKD (191 aa). The segment at 24-43 is disordered; sequence SHSHSEKNTGASSGATSEES. Low complexity predominate over residues 32–41; sequence TGASSGATSE. EF-hand domains lie at 64-97 and 102-126; these read SFEA…EDLN and TVKH…AWKA. Ca(2+) is bound by residues Asp76, Asp78, Asn80, Asp82, and Glu87. 2 N-linked (GlcNAc...) asparagine glycosylation sites follow: Asn131 and Asn171. Residues 132–200 form the SAM domain; sequence WTVDEVIQWL…QLKALDTVLF (69 aa). A helical membrane pass occupies residues 214–234; that stretch reads FMLVVSIVIGVGGCWFAYIQN. Topologically, residues 235–685 are cytoplasmic; the sequence is RYSKEHMKKM…LKIFKKPLKK (451 aa). Residues 248–442 are a coiled coil; sequence LEGLHRAEQS…IEILCGFQIV (195 aa). Ser257 carries the post-translational modification Phosphoserine. An SOAR/CAD region spans residues 344 to 442; sequence PEALQKWLQL…IEILCGFQIV (99 aa). The contributes to fast Ca(2+)-dependent inactivation of CRAC channels stretch occupies residues 475-483; that stretch reads DDVDDMDEE. Low complexity predominate over residues 490 to 499; the sequence is MQSPSLQSSV. The interval 490-542 is disordered; that stretch reads MQSPSLQSSVRQRLTEPQHGLGSQRDLTHSDSESSLHTSDRQRVAPKPPQMGR. Thr504 is subject to Phosphothreonine. Ser512 carries the post-translational modification Phosphoserine. A compositionally biased stretch (basic and acidic residues) spans 515 to 532; sequence DLTHSDSESSLHTSDRQR. Thr517 carries the post-translational modification Phosphothreonine. Phosphoserine is present on residues Ser519, Ser521, Ser523, Ser524, Ser567, Ser575, Ser602, Ser608, Ser618, Ser621, and Ser628. Residues 596-685 form a disordered region; it reads LMELNPSVPP…LKIFKKPLKK (90 aa). Positions 608–620 are enriched in low complexity; it reads SPLLDSSHSHSPS. The short motif at 642 to 645 is the Microtubule tip localization signal element; sequence TRIP. The span at 655–666 shows a compositional bias: acidic residues; sequence EEDNGSIGEETD. At Ser660 the chain carries Phosphoserine. A Phosphothreonine modification is found at Thr665. Residue Ser668 is modified to Phosphoserine. Basic residues predominate over residues 670–685; sequence GRKKFPLKIFKKPLKK. The required for generation of inwardly rectifying CRAC currents stretch occupies residues 672-685; the sequence is KKFPLKIFKKPLKK.

As to quaternary structure, monomer in the presence of Ca(2+). It oligomerizes in absence of Ca(2+). Forms homooligomers and heterooligomers with STIM2. Interacts with pore-forming subunits of CRAC channels, ORAI1, ORAI2 and ORAI3; this interaction is potentiated upon Ca(2+) store depletion. Interacts (via the transmembrane region and the SOAR/CAD domain) with SPPL3; the interaction promotes the binding of STIM1 to ORAI1. Interacts with ORAI1. Interacts with MAPRE1; probably required for targeting to the growing microtubule plus ends. Interacts with CRACR2A/EFCAB4B; the interaction is direct and takes place in absence of Ca(2+). Forms a complex with CRACR2A/EFCAB4B and ORAI1 at low concentration of Ca(2+), the complex dissociates at elevated Ca(2+) concentrations. Interacts with SARAF, promoting a slow inactivation of STIM1-dependent SOCE activity, possibly by facilitating the deoligomerization of STIM1. Interacts with EFHB; the interaction takes place upon Ca(2+)-store depletion and inhibits the association with SARAF. Interacts with ASPH. Interacts with SLC35G1; intracellular Ca(2+)-dependent. May interact with ATP1A1, ATP2A2, ATP2B1, ATP2B4, KPNB1 and XPO1; through SLC35G1. Interacts with TMEM203. Interacts with STIMATE, promoting STIM1 conformational switch. Interacts with TMEM178A. Interacts with CASQ1 (via C-terminal end and preferentially with the monomeric form); this interaction increases in response to a depletion of intracellular Ca(2+), decreases both STIM1 aggregation and clustering, interaction of STIM1 with ORAI1 and store-operated Ca(2+) entry (SOCE) activity. Interacts with ADCY8. Post-translationally, glycosylation is required for cell surface expression. In terms of processing, phosphorylated predominantly on Ser residues.

It localises to the cell membrane. The protein resides in the endoplasmic reticulum membrane. It is found in the sarcoplasmic reticulum. The protein localises to the cytoplasm. Its subcellular location is the cytoskeleton. Its function is as follows. Acts as a Ca(2+) sensor that gates two major inward rectifying Ca(2+) channels at the plasma membrane: Ca(2+) release-activated Ca(2+) (CRAC) channels and arachidonate-regulated Ca(2+)-selective (ARC) channels. Plays a role in mediating store-operated Ca(2+) entry (SOCE), a Ca(2+) influx following depletion of intracellular Ca(2+) stores. Upon Ca(2+) depletion, translocates from the endoplasmic reticulum to the plasma membrane where it activates CRAC channel pore-forming subunits ORA1, ORA2 and ORAI3 to generate sustained and oscillatory Ca(2+) entry. Involved in enamel formation. This chain is Stromal interaction molecule 1, found in Rattus norvegicus (Rat).